We begin with the raw amino-acid sequence, 649 residues long: MSEVHVYPVNQEIAATAHVNDEQYREMYQQSVINPEGFWREHGQIVDWIKPFTKVKHTSFDTGHVSVKWFEDGTLNVSANCIDRHLATRGDQPAIIWEGDDPTDDATFTYNELHEQVCKFSNALKSQGVRKGDVVCLYMPMVAEAAIAMLACTRIGAVHTIVFGGFSPEALAGRIVDSNAKLVITADEGVRAGRAVPLKKNVDDALANKNVTSIEKVIVLKRTGGNVEWHSERDVWWHEATAVASSHCEPEEMNAEDPLFILYTSGSTGKPKGVLHTTGGYLVYATMTFKYVFDYQEGDVYWCTADVGWITGHSYLVYGPLANGATTVLFEGVPNYPSTSRMSEVVDKHNVSILYTAPTAIRALMAKGTEAIKGTSRSSLRIMGSVGEPINPEAWEWYHHTIGDSRCPIVDTWWQTETGGILITPLPGATALKPGSATRPFFGVQPAIVDNMGNILEGVAEGNLVMVDSWPGQMRTLWGDHERFEQTYFSTFQGMYFTGDGARRDEDGYYWITGRVDDVLNISGHRMGTAEIESALVAFDKIAEAAIVGVPHDIKGQAIYAYITLNDGEIPSAELHKEVKDWVRKEIGPIATPDFLHWTDALPKTRSGKIMRRILRKIATGDTGSLGDTSTLADPSVVDKLIAEKQTIL.

CoA-binding positions include 191 to 194, threonine 311, and asparagine 335; that span reads RAGR. ATP-binding positions include 387–389, 411–416, aspartate 500, and arginine 515; these read GEP and DTWWQT. Residue serine 523 coordinates CoA. Arginine 526 serves as a coordination point for ATP. Positions 537, 539, and 542 each coordinate Mg(2+). Position 584 (arginine 584) interacts with CoA. Position 609 is an N6-acetyllysine (lysine 609).

It belongs to the ATP-dependent AMP-binding enzyme family. Mg(2+) is required as a cofactor. Post-translationally, acetylated. Deacetylation by the SIR2-homolog deacetylase activates the enzyme.

The enzyme catalyses acetate + ATP + CoA = acetyl-CoA + AMP + diphosphate. Catalyzes the conversion of acetate into acetyl-CoA (AcCoA), an essential intermediate at the junction of anabolic and catabolic pathways. AcsA undergoes a two-step reaction. In the first half reaction, AcsA combines acetate with ATP to form acetyl-adenylate (AcAMP) intermediate. In the second half reaction, it can then transfer the acetyl group from AcAMP to the sulfhydryl group of CoA, forming the product AcCoA. This chain is Acetyl-coenzyme A synthetase, found in Photobacterium profundum (strain SS9).